A 578-amino-acid chain; its full sequence is CTP synthase (578 aa).

The 255-residue stretch at 305–559 (KIALVGKYTN…LGLVAASSGI (255 aa)) folds into the Glutamine amidotransferase type-1 domain. Active-site for GATase activity residues include cysteine 404, histidine 535, and glutamate 537.

This sequence belongs to the CTP synthase family.

The enzyme catalyses UTP + L-glutamine + ATP + H2O = CTP + L-glutamate + ADP + phosphate + 2 H(+). It functions in the pathway pyrimidine metabolism; CTP biosynthesis via de novo pathway; CTP from UDP: step 2/2. Its function is as follows. Catalyzes the ATP-dependent amination of UTP to CTP with either L-glutamine or ammonia as the source of nitrogen. The polypeptide is CTP synthase (URA7) (Candida glabrata (strain ATCC 2001 / BCRC 20586 / JCM 3761 / NBRC 0622 / NRRL Y-65 / CBS 138) (Yeast)).